Here is a 187-residue protein sequence, read N- to C-terminus: MKNNQNLIWIDLEMTGLEPEQDRIIEMATIVTDPQLNILAEGPVIAVSQPKILLDSMDAWNTKQHNQSGLVKRVLESNVSESQAEQLTIEFLKQYVDKGKSPMCGNSICQDRRFLYKYMPELAAYFHYRNLDVSSLKELVLRWRPELMNGVVKESKHLALDDIKDSINELIYYRQHFINLPEVKNDK.

Positions 7–170 (LIWIDLEMTG…DDIKDSINEL (164 aa)) constitute an Exonuclease domain. Tyr-128 is an active-site residue.

Belongs to the oligoribonuclease family.

It localises to the cytoplasm. 3'-to-5' exoribonuclease specific for small oligoribonucleotides. The chain is Oligoribonuclease from Legionella pneumophila (strain Paris).